Reading from the N-terminus, the 379-residue chain is Alkanesulfonate monooxygenase (379 aa).

Belongs to the SsuD family.

It carries out the reaction an alkanesulfonate + FMNH2 + O2 = an aldehyde + FMN + sulfite + H2O + 2 H(+). Its function is as follows. Catalyzes the desulfonation of aliphatic sulfonates. In Pseudomonas syringae pv. tomato (strain ATCC BAA-871 / DC3000), this protein is Alkanesulfonate monooxygenase.